The primary structure comprises 263 residues: tRNA pseudouridine synthase A (263 aa).

D53 (nucleophile) is an active-site residue. Y111 contacts substrate. The segment at 232–263 is disordered; that stretch reads TAPGHGLISGRSNMTNGKLENNKTTNPCVTKY. Over residues 241–263 the composition is skewed to polar residues; it reads GRSNMTNGKLENNKTTNPCVTKY.

This sequence belongs to the tRNA pseudouridine synthase TruA family. In terms of assembly, homodimer.

The enzyme catalyses uridine(38/39/40) in tRNA = pseudouridine(38/39/40) in tRNA. In terms of biological role, formation of pseudouridine at positions 38, 39 and 40 in the anticodon stem and loop of transfer RNAs. This is tRNA pseudouridine synthase A from Halalkalibacterium halodurans (strain ATCC BAA-125 / DSM 18197 / FERM 7344 / JCM 9153 / C-125) (Bacillus halodurans).